Here is a 154-residue protein sequence, read N- to C-terminus: MRCPTCKYNGTRVVDSRPADDGNSIRRRRECEKCGFRFTTFEKVEESPLIVVKKDGAREEFAREKVRRGLIRACEKRPVSAEQIEEIVNEVERELRNIGDSEIASDLIGEKVMNKLANLDEVAYVRFASVYRQFKDISVFVEELKDLMEKNKDR.

A zinc finger spans residues 3–34 (CPTCKYNGTRVVDSRPADDGNSIRRRRECEKC). One can recognise an ATP-cone domain in the interval 49 to 139 (LIVVKKDGAR…VYRQFKDISV (91 aa)).

It belongs to the NrdR family. Zn(2+) is required as a cofactor.

In terms of biological role, negatively regulates transcription of bacterial ribonucleotide reductase nrd genes and operons by binding to NrdR-boxes. The chain is Transcriptional repressor NrdR from Listeria welshimeri serovar 6b (strain ATCC 35897 / DSM 20650 / CCUG 15529 / CIP 8149 / NCTC 11857 / SLCC 5334 / V8).